The primary structure comprises 225 residues: MKLIVSVMPRSLEEAQALDATRYLDADIIEWRADYLPKEAILQVAPAIFEKFAGRELVFTLRTRSEGGEIDLSPEEYIHLIKEVAQFYQPDYIDFEYYSYKDVFEEMLDFPNLVLSYHNFQETPENMMEILSELTILNPKLVKVAVMAHTEQDVLDLMNYTRGFKTLNPEQEYVTISMGKVGKVSRITADVTGSSWSFASLDEVSAPGQISLASMKKIREILDEA.

Residues Ser6, 30–32 (EWR), and Arg62 each bind 3-dehydroquinate. His118 (proton donor/acceptor) is an active-site residue. The Schiff-base intermediate with substrate role is filled by Lys143. Residues Arg186, Ser205, and Gln209 each coordinate 3-dehydroquinate.

Belongs to the type-I 3-dehydroquinase family. Homodimer.

The enzyme catalyses 3-dehydroquinate = 3-dehydroshikimate + H2O. It functions in the pathway metabolic intermediate biosynthesis; chorismate biosynthesis; chorismate from D-erythrose 4-phosphate and phosphoenolpyruvate: step 3/7. In terms of biological role, involved in the third step of the chorismate pathway, which leads to the biosynthesis of aromatic amino acids. Catalyzes the cis-dehydration of 3-dehydroquinate (DHQ) and introduces the first double bond of the aromatic ring to yield 3-dehydroshikimate. The chain is 3-dehydroquinate dehydratase from Streptococcus pneumoniae (strain Hungary19A-6).